The chain runs to 214 residues: Probable transaldolase 1 (214 aa).

Catalysis depends on Lys-83, which acts as the Schiff-base intermediate with substrate.

This sequence belongs to the transaldolase family. Type 3B subfamily.

Its subcellular location is the cytoplasm. It catalyses the reaction D-sedoheptulose 7-phosphate + D-glyceraldehyde 3-phosphate = D-erythrose 4-phosphate + beta-D-fructose 6-phosphate. It functions in the pathway carbohydrate degradation; pentose phosphate pathway; D-glyceraldehyde 3-phosphate and beta-D-fructose 6-phosphate from D-ribose 5-phosphate and D-xylulose 5-phosphate (non-oxidative stage): step 2/3. Functionally, transaldolase is important for the balance of metabolites in the pentose-phosphate pathway. This is Probable transaldolase 1 from Listeria monocytogenes serotype 4b (strain F2365).